The following is a 166-amino-acid chain: MFPMLTEFMNYGQQTVRAARYIGQGFMITLSHANRLPVTIQYPYEKLITSERFRGRIHFEFDKCIACEVCVRVCPIDLPVVDWKLETDIRKKRLLNYSIDFGICIFCGNCVEYCPTNCLSMTEEYELSTYDRHELNYNQIALGRLPMSIIDDYTIRTILNLPEIKT.

4Fe-4S ferredoxin-type domains follow at residues 55-84 (GRIH…VDWK) and 95-124 (LNYS…MTEE). Residues C64, C67, C70, C74, C104, C107, C110, and C114 each coordinate [4Fe-4S] cluster.

Belongs to the complex I 23 kDa subunit family. As to quaternary structure, NDH is composed of at least 16 different subunits, 5 of which are encoded in the nucleus. [4Fe-4S] cluster is required as a cofactor.

The protein resides in the plastid. Its subcellular location is the chloroplast thylakoid membrane. The catalysed reaction is a plastoquinone + NADH + (n+1) H(+)(in) = a plastoquinol + NAD(+) + n H(+)(out). The enzyme catalyses a plastoquinone + NADPH + (n+1) H(+)(in) = a plastoquinol + NADP(+) + n H(+)(out). NDH shuttles electrons from NAD(P)H:plastoquinone, via FMN and iron-sulfur (Fe-S) centers, to quinones in the photosynthetic chain and possibly in a chloroplast respiratory chain. The immediate electron acceptor for the enzyme in this species is believed to be plastoquinone. Couples the redox reaction to proton translocation, and thus conserves the redox energy in a proton gradient. The chain is NAD(P)H-quinone oxidoreductase subunit I, chloroplastic from Bahiopsis tomentosa (Tecote).